Reading from the N-terminus, the 630-residue chain is tRNA uridine 5-carboxymethylaminomethyl modification enzyme MnmG (630 aa).

Gly13–Gly18 contacts FAD. Residue Gly273–Phe287 participates in NAD(+) binding.

The protein belongs to the MnmG family. As to quaternary structure, homodimer. Heterotetramer of two MnmE and two MnmG subunits. FAD serves as cofactor.

It is found in the cytoplasm. Its function is as follows. NAD-binding protein involved in the addition of a carboxymethylaminomethyl (cmnm) group at the wobble position (U34) of certain tRNAs, forming tRNA-cmnm(5)s(2)U34. This Pseudomonas aeruginosa (strain LESB58) protein is tRNA uridine 5-carboxymethylaminomethyl modification enzyme MnmG.